The primary structure comprises 321 residues: Sideroflexin-3 (321 aa).

The residue at position 1 (M1) is an N-acetylmethionine. 4 helical membrane-spanning segments follow: residues 146–164 (LGTA…ALGL), 174–194 (LVGR…NIPL), 225–245 (IFQV…IPPV), and 266–286 (LQVG…CALF).

It belongs to the sideroflexin family. Widely expressed.

The protein resides in the mitochondrion membrane. It catalyses the reaction L-serine(in) = L-serine(out). In terms of biological role, mitochondrial serine transporter that mediates transport of serine into mitochondria, an important step of the one-carbon metabolism pathway. Mitochondrial serine is converted to glycine and formate, which then exits to the cytosol where it is used to generate the charged folates that serve as one-carbon donors. The protein is Sideroflexin-3 of Mus musculus (Mouse).